The sequence spans 137 residues: uncharacterized protein (137 aa).

The N-terminal stretch at 1-21 (MFNRRVLFLSVFSCAVFMLSG) is a signal peptide. A lipid anchor (N-palmitoyl cysteine) is attached at C22. Residue C22 is the site of S-diacylglycerol cysteine attachment.

The protein resides in the membrane. This is an uncharacterized protein from Escherichia coli (strain K12).